An 82-amino-acid chain; its full sequence is Cytochrome b-c1 complex subunit 8 (82 aa).

Residues 1–39 (MGREFGNLTRMRHVITYSLSPFEQRAFPHYFSKGIPNVL) lie on the Mitochondrial matrix side of the membrane. The residue at position 33 (Lys-33) is an N6-acetyllysine; alternate. At Lys-33 the chain carries N6-succinyllysine; alternate. Residues 40–68 (RRMRACVLRVVPPFVAFYLVYTWGTQEFE) traverse the membrane as a helical segment. The Mitochondrial intermembrane portion of the chain corresponds to 69 to 82 (NSKRKNPAAYENDK).

This sequence belongs to the UQCRQ/QCR8 family. Component of the ubiquinol-cytochrome c oxidoreductase (cytochrome b-c1 complex, complex III, CIII), a multisubunit enzyme composed of 11 subunits. The complex is composed of 3 respiratory subunits cytochrome b, cytochrome c1 and Rieske protein UQCRFS1, 2 core protein subunits UQCRC1/QCR1 and UQCRC2/QCR2, and 6 low-molecular weight protein subunits UQCRH/QCR6, UQCRB/QCR7, UQCRQ/QCR8, UQCR10/QCR9, UQCR11/QCR10 and subunit 9, the cleavage product of Rieske protein UQCRFS1. The complex exists as an obligatory dimer and forms supercomplexes (SCs) in the inner mitochondrial membrane with NADH-ubiquinone oxidoreductase (complex I, CI) and cytochrome c oxidase (complex IV, CIV), resulting in different assemblies (supercomplex SCI(1)III(2)IV(1) and megacomplex MCI(2)III(2)IV(2)). Interacts with UQCC6.

The protein localises to the mitochondrion inner membrane. Functionally, component of the ubiquinol-cytochrome c oxidoreductase, a multisubunit transmembrane complex that is part of the mitochondrial electron transport chain which drives oxidative phosphorylation. The respiratory chain contains 3 multisubunit complexes succinate dehydrogenase (complex II, CII), ubiquinol-cytochrome c oxidoreductase (cytochrome b-c1 complex, complex III, CIII) and cytochrome c oxidase (complex IV, CIV), that cooperate to transfer electrons derived from NADH and succinate to molecular oxygen, creating an electrochemical gradient over the inner membrane that drives transmembrane transport and the ATP synthase. The cytochrome b-c1 complex catalyzes electron transfer from ubiquinol to cytochrome c, linking this redox reaction to translocation of protons across the mitochondrial inner membrane, with protons being carried across the membrane as hydrogens on the quinol. In the process called Q cycle, 2 protons are consumed from the matrix, 4 protons are released into the intermembrane space and 2 electrons are passed to cytochrome c. The protein is Cytochrome b-c1 complex subunit 8 (UQCRQ) of Ailuropoda melanoleuca (Giant panda).